A 1153-amino-acid polypeptide reads, in one-letter code: PPi-type phosphoenolpyruvate carboxykinase 3 (1153 aa).

A coiled-coil region spans residues 1085-1131 (RQKLEVAKLNKDLAYLNKTIAEKPRLAETLNKQIAAVKEELQYVSSE).

This sequence belongs to the PPi-type phosphoenolpyruvate carboxykinase family. Monomer and trimer; forms heterotrimers with PEPCK1 and PEPCK2.

The protein localises to the cytoplasm. Its subcellular location is the cytosol. The catalysed reaction is oxaloacetate + diphosphate = phosphoenolpyruvate + phosphate + CO2. In terms of biological role, inorganic pyrophosphate (PPi)-dependent phosphoenolpyruvate carboxykinase, which regulates the carbon flow of the central metabolism by fixing CO(2) to phosphoenolpyruvate to produce oxaloacetate. Can also produce pyruvate and diphosphate from phosphoenolpyruvate and phosphate. This is PPi-type phosphoenolpyruvate carboxykinase 3 from Entamoeba histolytica (strain ATCC 30459 / HM-1:IMSS / ABRM).